Consider the following 1067-residue polypeptide: Hemoglobin and hemoglobin-haptoglobin-binding protein B (1067 aa).

The N-terminal stretch at 1–24 is a signal peptide; sequence MTNFKFSLLACSIAFALNASTAYA. Tandem repeats lie at residues 26–29, 30–33, 34–37, 38–41, 42–45, and 46–49. The tract at residues 26 to 49 is 6 X 4 AA tandem repeats of Q-P-T-N; the sequence is QPTNQPTNQPTNQPTNQPTNQPTN. A compositionally biased stretch (low complexity) spans 26–51; that stretch reads QPTNQPTNQPTNQPTNQPTNQPTNQN. Residues 26-53 form a disordered region; the sequence is QPTNQPTNQPTNQPTNQPTNQPTNQNSN. The TonB box motif lies at 59-66; sequence EQINVSGS. The 126-residue stretch at 71-196 folds into the TBDR plug domain; it reads NIKEKKVGET…LGGSVIFETK (126 aa). The region spanning 204–1067 is the TBDR beta-barrel domain; sequence DKDYYLSYKR…NYRMSVQFEF (864 aa). The short motif at 1050–1067 is the TonB C-terminal box element; that stretch reads NRFYAPGRNYRMSVQFEF.

This sequence belongs to the TonB-dependent receptor family. Hemoglobin/haptoglobin binding protein subfamily.

Its subcellular location is the cell outer membrane. Acts as a receptor for hemoglobin or the hemoglobin/haptoglobin complex of the human host and is required for heme uptake. The polypeptide is Hemoglobin and hemoglobin-haptoglobin-binding protein B (hgbB) (Haemophilus influenzae).